The primary structure comprises 226 residues: UPF0758 protein Spy49_0870 (226 aa).

Residues 103-225 form the MPN domain; the sequence is SVLTSVQVAE…YYSFREKSTL (123 aa). Zn(2+) contacts are provided by His174, His176, and Asp187. The JAMM motif motif lies at 174–187; that stretch reads HNHPSGNIEPSSND.

This sequence belongs to the UPF0758 family.

In Streptococcus pyogenes serotype M49 (strain NZ131), this protein is UPF0758 protein Spy49_0870.